The following is a 218-amino-acid chain: MMP 1-O-methyltransferase (218 aa).

S-adenosyl-L-methionine contacts are provided by phenylalanine 20, glycine 46, serine 52, aspartate 71, glycine 75, and serine 124. A Mg(2+)-binding site is contributed by aspartate 141. Histidine 144 serves as the catalytic Proton acceptor. Arginine 151 is a binding site for S-adenosyl-L-methionine. 2 residues coordinate Mg(2+): histidine 169 and aspartate 170.

This sequence belongs to the methyltransferase superfamily. Homodimer. It depends on Mg(2+) as a cofactor.

It catalyses the reaction 3,3'-di-O-methyl-4alpha-mannobiose + S-adenosyl-L-methionine = 1,3,3'-tri-O-methyl-4alpha-mannobiose + S-adenosyl-L-homocysteine + H(+). Inhibited by EDTA. In terms of biological role, involved in the biosynthesis of 3-O-methylmannose polysaccharides (MMP), which are intracellular polymethylated polysaccharides implicated in the modulation of fatty acid metabolism in non-tuberculous mycobacteria. Specifically methylates the 1-OH position of 3,3'-di-O-methyl-4alpha-mannobiose, a probable early precursor of MMP, yielding the reducing end dimannoside of MMP. This Mycolicibacterium hassiacum (strain DSM 44199 / CIP 105218 / JCM 12690 / 3849) (Mycobacterium hassiacum) protein is MMP 1-O-methyltransferase.